Reading from the N-terminus, the 202-residue chain is NADH-quinone oxidoreductase subunit C (202 aa).

This sequence belongs to the complex I 30 kDa subunit family. In terms of assembly, NDH-1 is composed of 14 different subunits. Subunits NuoB, C, D, E, F, and G constitute the peripheral sector of the complex.

The protein localises to the cell inner membrane. It carries out the reaction a quinone + NADH + 5 H(+)(in) = a quinol + NAD(+) + 4 H(+)(out). Functionally, NDH-1 shuttles electrons from NADH, via FMN and iron-sulfur (Fe-S) centers, to quinones in the respiratory chain. The immediate electron acceptor for the enzyme in this species is believed to be ubiquinone. Couples the redox reaction to proton translocation (for every two electrons transferred, four hydrogen ions are translocated across the cytoplasmic membrane), and thus conserves the redox energy in a proton gradient. The chain is NADH-quinone oxidoreductase subunit C from Paracidovorax citrulli (strain AAC00-1) (Acidovorax citrulli).